Here is a 429-residue protein sequence, read N- to C-terminus: Enolase (429 aa).

Glutamine 163 provides a ligand contact to (2R)-2-phosphoglycerate. The active-site Proton donor is the glutamate 205. Positions 242, 286, and 313 each coordinate Mg(2+). (2R)-2-phosphoglycerate-binding residues include lysine 338, arginine 367, serine 368, and lysine 389. The active-site Proton acceptor is the lysine 338.

Belongs to the enolase family. The cofactor is Mg(2+).

Its subcellular location is the cytoplasm. The protein localises to the secreted. The protein resides in the cell surface. It catalyses the reaction (2R)-2-phosphoglycerate = phosphoenolpyruvate + H2O. Its pathway is carbohydrate degradation; glycolysis; pyruvate from D-glyceraldehyde 3-phosphate: step 4/5. Functionally, catalyzes the reversible conversion of 2-phosphoglycerate (2-PG) into phosphoenolpyruvate (PEP). It is essential for the degradation of carbohydrates via glycolysis. The polypeptide is Enolase (Citrifermentans bemidjiense (strain ATCC BAA-1014 / DSM 16622 / JCM 12645 / Bem) (Geobacter bemidjiensis)).